Reading from the N-terminus, the 376-residue chain is Multiphosphoryl transfer protein (376 aa).

A PTS EIIA type-2 domain is found at 2–142 (FQLSVQDIHP…EELRALLMGE (141 aa)). The Tele-phosphohistidine intermediate; for EIIA activity role is filled by histidine 62. Phosphohistidine; by HPr is present on histidine 62. A m domain region spans residues 156–284 (TLDVIASSLV…LTSDDALTDD (129 aa)). The region spanning 285 to 375 (VLSAEFVVRN…DAIAAGLGEG (91 aa)) is the HPr domain. The active-site Pros-phosphohistidine intermediate; for HPr activity is the histidine 299. Histidine 299 carries the phosphohistidine; by EI modification.

It is found in the cytoplasm. Its function is as follows. The phosphoenolpyruvate-dependent sugar phosphotransferase system (sugar PTS), a major carbohydrate active transport system, catalyzes the phosphorylation of incoming sugar substrates concomitantly with their translocation across the cell membrane. The enzyme II FruAB PTS system is involved in fructose transport. The polypeptide is Multiphosphoryl transfer protein (fruB) (Salmonella typhi).